Reading from the N-terminus, the 67-residue chain is Large ribosomal subunit protein uL29 (67 aa).

It belongs to the universal ribosomal protein uL29 family.

The polypeptide is Large ribosomal subunit protein uL29 (Polaromonas naphthalenivorans (strain CJ2)).